The primary structure comprises 206 residues: LexA repressor (206 aa).

The H-T-H motif DNA-binding region spans 28–48 (VREICNAVGLSSTSTVHGHLS). Active-site for autocatalytic cleavage activity residues include serine 128 and lysine 166.

The protein belongs to the peptidase S24 family. In terms of assembly, homodimer.

It carries out the reaction Hydrolysis of Ala-|-Gly bond in repressor LexA.. Functionally, represses a number of genes involved in the response to DNA damage (SOS response), including recA and lexA. In the presence of single-stranded DNA, RecA interacts with LexA causing an autocatalytic cleavage which disrupts the DNA-binding part of LexA, leading to derepression of the SOS regulon and eventually DNA repair. This Ligilactobacillus salivarius (strain UCC118) (Lactobacillus salivarius) protein is LexA repressor.